Reading from the N-terminus, the 776-residue chain is Genome polyprotein (776 aa).

Residues Met1 to Arg27 form a disordered region. Residues Met1–Thr98 lie on the Cytoplasmic side of the membrane. Residues Arg17–Arg27 are compositionally biased toward basic residues. The hydrophobic; homodimerization of capsid protein C stretch occupies residues Met33 to Leu68. The propeptide at Thr97–Ala117 is ER anchor for the protein C, removed in mature form by serine protease NS3. Residues Ile99–Ala117 form a helical membrane-spanning segment. The Extracellular segment spans residues Thr118–Trp242. Asn144 carries N-linked (GlcNAc...) asparagine; by host glycosylation. A helical membrane pass occupies residues Lys243–Asp260. Position 261 (Gly261) is a topological domain, cytoplasmic. The chain crosses the membrane as a helical span at residues Leu262 to Ala280. The Extracellular segment spans residues Ser281–Thr727. 4 disulfides stabilise this stretch: Cys283–Cys310, Cys340–Cys396, Cys354–Cys385, and Cys372–Cys401. Asn434 is a glycosylation site (N-linked (GlcNAc...) asparagine; by host). 2 cysteine pairs are disulfide-bonded: Cys466/Cys570 and Cys587/Cys618. An intramembrane region (helical) is located at residues Leu728–Gly748. The Extracellular portion of the chain corresponds to Leu749 to Thr755. Residues Leu756 to Ala776 constitute an intramembrane region (helical).

Post-translationally, specific enzymatic cleavages in vivo yield mature proteins Peptide 2K acts as a signal sequence and is removed from the N-terminus of NS4B by the host signal peptidase in the ER lumen. Signal cleavage at the 2K-4B site requires a prior NS3 protease-mediated cleavage at the 4A-2K site.

The protein resides in the virion. It localises to the secreted. Its subcellular location is the virion membrane. The protein localises to the host endoplasmic reticulum membrane. In terms of biological role, capsid protein C self-assembles to form an icosahedral capsid about 30 nm in diameter. The capsid encapsulates the genomic RNA. Its function is as follows. prM acts as a chaperone for envelope protein E during intracellular virion assembly by masking and inactivating envelope protein E fusion peptide. prM is matured in the last step of virion assembly, presumably to avoid catastrophic activation of the viral fusion peptide induced by the acidic pH of the trans-Golgi network. After cleavage by host furin, the pr peptide is released in the extracellular medium and small envelope protein M and envelope protein E homodimers are dissociated. Envelope protein E binding to host cell surface receptor is followed by virus internalization through clathrin-mediated endocytosis. Envelope protein E is subsequently involved in membrane fusion between virion and host late endosomes. Synthesized as a homodimer with prM which acts as a chaperone for envelope protein E. After cleavage of prM, envelope protein E dissociate from small envelope protein M and homodimerizes. This Homo sapiens (Human) protein is Genome polyprotein.